We begin with the raw amino-acid sequence, 344 residues long: Heat-inducible transcription repressor HrcA (344 aa).

The protein belongs to the HrcA family.

Its function is as follows. Negative regulator of class I heat shock genes (grpE-dnaK-dnaJ and groELS operons). Prevents heat-shock induction of these operons. This chain is Heat-inducible transcription repressor HrcA, found in Streptococcus pneumoniae (strain ATCC 700669 / Spain 23F-1).